A 275-amino-acid polypeptide reads, in one-letter code: Hydroxyethylthiazole kinase (275 aa).

Methionine 50 contributes to the substrate binding site. The ATP site is built by arginine 126 and serine 171. A substrate-binding site is contributed by alanine 200.

The protein belongs to the Thz kinase family. The cofactor is Mg(2+).

The enzyme catalyses 5-(2-hydroxyethyl)-4-methylthiazole + ATP = 4-methyl-5-(2-phosphooxyethyl)-thiazole + ADP + H(+). It functions in the pathway cofactor biosynthesis; thiamine diphosphate biosynthesis; 4-methyl-5-(2-phosphoethyl)-thiazole from 5-(2-hydroxyethyl)-4-methylthiazole: step 1/1. Catalyzes the phosphorylation of the hydroxyl group of 4-methyl-5-beta-hydroxyethylthiazole (THZ). The chain is Hydroxyethylthiazole kinase from Acinetobacter baumannii (strain SDF).